The following is a 567-amino-acid chain: SRSF protein kinase 3 (567 aa).

The segment covering 1-16 (MSASTGGGGDSGGSGG) has biased composition (gly residues). Residues 1 to 36 (MSASTGGGGDSGGSGGSSSSSQASCGPESSGSELAL) form a disordered region. Over residues 17-32 (SSSSSQASCGPESSGS) the composition is skewed to low complexity. Ser50 carries the phosphoserine modification. The region spanning 79-565 (YHVVRKLGWG…AADCLQHPWL (487 aa)) is the Protein kinase domain. ATP contacts are provided by residues 85-93 (LGWGHFSTV) and Lys108. Asp212 serves as the catalytic Proton acceptor. Disordered regions lie at residues 238 to 283 (QQAG…RLLE) and 298 to 351 (ATQA…SQTS). Positions 248–258 (SIVSTAPQEVL) are enriched in polar residues. The segment covering 264–279 (SKNKRKKMRRKRKQQK) has biased composition (basic residues). Over residues 327-348 (AGPSPASSSPAPGGGRSLSAGS) the composition is skewed to low complexity. A Phosphoserine modification is found at Ser330.

This sequence belongs to the protein kinase superfamily. CMGC Ser/Thr protein kinase family. In terms of tissue distribution, expressed in skeletal and heart muscle. Also expressed in the fetal brain.

It is found in the nucleus. Its subcellular location is the cytoplasm. It carries out the reaction L-seryl-[protein] + ATP = O-phospho-L-seryl-[protein] + ADP + H(+). It catalyses the reaction L-threonyl-[protein] + ATP = O-phospho-L-threonyl-[protein] + ADP + H(+). Functionally, serine/arginine-rich protein-specific kinase which specifically phosphorylates its substrates at serine residues located in regions rich in arginine/serine dipeptides, known as RS domains. Phosphorylates the SR splicing factor SRSF1 and the lamin-B receptor (LBR) in vitro. Required for normal muscle development. This chain is SRSF protein kinase 3 (SRPK3), found in Homo sapiens (Human).